The primary structure comprises 348 residues: UDP-3-O-acylglucosamine N-acyltransferase (348 aa).

Catalysis depends on histidine 243, which acts as the Proton acceptor.

Belongs to the transferase hexapeptide repeat family. LpxD subfamily. In terms of assembly, homotrimer.

It carries out the reaction a UDP-3-O-[(3R)-3-hydroxyacyl]-alpha-D-glucosamine + a (3R)-hydroxyacyl-[ACP] = a UDP-2-N,3-O-bis[(3R)-3-hydroxyacyl]-alpha-D-glucosamine + holo-[ACP] + H(+). It participates in bacterial outer membrane biogenesis; LPS lipid A biosynthesis. Its function is as follows. Catalyzes the N-acylation of UDP-3-O-acylglucosamine using 3-hydroxyacyl-ACP as the acyl donor. Is involved in the biosynthesis of lipid A, a phosphorylated glycolipid that anchors the lipopolysaccharide to the outer membrane of the cell. The polypeptide is UDP-3-O-acylglucosamine N-acyltransferase (Hahella chejuensis (strain KCTC 2396)).